Reading from the N-terminus, the 446-residue chain is Gasdermin-A (446 aa).

The triggers pyroptosis stretch occupies residues 1–252; it reads MTMFENVTRA…FILIQASDVG (252 aa). Position 9–13 (9–13) interacts with a cardiolipin; that stretch reads RALAR. A run of 4 beta stranded transmembrane segments spans residues 78–95, 99–120, 164–180, and 184–198; these read NFSF…DVDV, VKVK…TLSV, VTLE…SLPF, and LGLQ…AVTI.

It belongs to the gasdermin family. Homooligomer; homooligomeric ring-shaped pore complex containing 18-36 subunits when inserted in the membrane. In terms of processing, cleavage by bacterial SpeB relieves autoinhibition by releasing the N-terminal moiety (Gasdermin-A, N-terminal) that initiates pyroptosis. Post-translationally, palmitoylated. As to expression, expressed predominantly in the gastrointestinal (GI) tract and in the skin at a lower level. In the GI tract, the expression is highly restricted to the esophagus and forestomach.

The protein resides in the cytoplasm. The protein localises to the perinuclear region. Its subcellular location is the cytosol. It is found in the cell membrane. With respect to regulation, the full-length protein before cleavage is inactive: intramolecular interactions between N- and C-terminal domains mediate autoinhibition in the absence of activation signal. The intrinsic pyroptosis-inducing activity is carried by the released N-terminal moiety (Gasdermin-A, N-terminal) following cleavage by bacterial effector protein SpeB. Its function is as follows. This form constitutes the precursor of the pore-forming protein and acts as a sensor of bacterial infection: upon infection, specifically cleaved by bacterial effector protein SpeB in epithelial cells, releasing the N-terminal moiety (Gasdermin-A, N-terminal) that binds to membranes and forms pores, triggering pyroptosis. Functionally, pore-forming protein that causes membrane permeabilization and pyroptosis. Released upon cleavage by bacterial effector protein SpeB, and binds to membrane inner leaflet lipids. Homooligomerizes within the membrane and forms pores of 10-15 nanometers (nm) of inner diameter, triggering pyroptosis. Pyroptosis triggers the elimination of the infected skin cell, depriving the pathogen of its protective niche, while inducing an inflammatory response. This ultimately prevents bacterial penetration of the epithelial barrier and a subsequent systemic dissemination of the pathogen. Binds to cardiolipin and other acidic phospholipids, such as phosphatidylserine, which mediate its targeting to the inner leaflet membrane. The sequence is that of Gasdermin-A (Gsdma) from Mus musculus (Mouse).